Reading from the N-terminus, the 275-residue chain is Putative hydro-lyase SPO1111 (275 aa).

It belongs to the D-glutamate cyclase family.

This chain is Putative hydro-lyase SPO1111, found in Ruegeria pomeroyi (strain ATCC 700808 / DSM 15171 / DSS-3) (Silicibacter pomeroyi).